The chain runs to 372 residues: MSKSESPKEPEQLRKLFIGGLSFETTDESLRSHFEQWGTLTDCVVMRDPNTKRSRGFGFVTYATVEEVDAAMNARPHKVDGRVVEPKRAVSREDSQRPGAHLTVKKIFVGGIKEDTEEHHLRDYFEQYGKIEVIEIMTDRGSGKKRGFAFVTFDDHDSVDKIVIQKYHTVNGHNCEVRKALSKQEMASASSSQRGRSGSGNFGGGRGGGFGGNDNFGRGGNFSGRGGFGGSRGGGGYGGSGDGYNGFGNDGGYGGGGPGYSGGSRGYGSGGQGYGNQGSGYGGSGSYDSYNNGGGGGFGGGSGSNFGGGGSYNDFGNYNNQSSNFGPMKGGNFGGRSSGPYGGGGQYFAKPRNQGGYGGSSSSSSYGSGRRF.

M1 bears the N-acetylmethionine mark. S2 is subject to N-acetylserine; in Heterogeneous nuclear ribonucleoprotein A1, N-terminally processed. Position 2 is a phosphoserine (S2). K3 carries the post-translational modification N6-acetyllysine; alternate. K3 is covalently cross-linked (Glycyl lysine isopeptide (Lys-Gly) (interchain with G-Cter in SUMO2); alternate). Phosphoserine is present on residues S4 and S6. Positions 4 to 94 (SESPKEPEQL…EPKRAVSRED (91 aa)) are globular A domain. Residue K8 forms a Glycyl lysine isopeptide (Lys-Gly) (interchain with G-Cter in SUMO2) linkage. RRM domains are found at residues 14 to 97 (RKLF…DSQR) and 105 to 184 (KKIF…LSKQ). S22 carries the phosphoserine modification. K78 is covalently cross-linked (Glycyl lysine isopeptide (Lys-Gly) (interchain with G-Cter in SUMO2)). A globular B domain region spans residues 95 to 185 (SQRPGAHLTV…EVRKALSKQE (91 aa)). K113 participates in a covalent cross-link: Glycyl lysine isopeptide (Lys-Gly) (interchain with G-Cter in SUMO). Residues K179 and K183 each participate in a glycyl lysine isopeptide (Lys-Gly) (interchain with G-Cter in SUMO2) cross-link. A disordered region spans residues 182–216 (SKQEMASASSSQRGRSGSGNFGGGRGGGFGGNDNF). At S192 the chain carries Phosphoserine; by MKNK2. R194 is subject to Asymmetric dimethylarginine; alternate. R194 carries the post-translational modification Dimethylated arginine; alternate. R194 carries the post-translational modification Omega-N-methylarginine; alternate. Residues 197–216 (SGSGNFGGGRGGGFGGNDNF) show a composition bias toward gly residues. The residue at position 199 (S199) is a Phosphoserine. Asymmetric dimethylarginine; alternate is present on residues R206, R218, R225, and R232. The residue at position 206 (R206) is a Dimethylated arginine; alternate. 4 positions are modified to omega-N-methylarginine; alternate: R206, R218, R225, and R232. The segment at 218 to 240 (RGGNFSGRGGFGGSRGGGGYGGS) is RNA-binding RGG-box. Dimethylated arginine; alternate is present on R225. Residues 317 to 372 (NYNNQSSNFGPMKGGNFGGRSSGPYGGGGQYFAKPRNQGGYGGSSSSSSYGSGRRF) form a disordered region. The tract at residues 320-357 (NQSSNFGPMKGGNFGGRSSGPYGGGGQYFAKPRNQGGY) is nuclear targeting sequence (M9). A compositionally biased stretch (gly residues) spans 328–346 (MKGGNFGGRSSGPYGGGGQ). An Omega-N-methylarginine modification is found at R336. The residue at position 337 (S337) is a Phosphoserine. K350 carries the N6-acetyllysine; alternate modification. Residue K350 forms a Glycyl lysine isopeptide (Lys-Gly) (interchain with G-Cter in SUMO2); alternate linkage. R352 carries the omega-N-methylarginine modification. A compositionally biased stretch (low complexity) spans 360 to 372 (SSSSSSYGSGRRF). A Phosphoserine modification is found at S361. Phosphoserine; by MKNK2 occurs at positions 362, 363, and 364. Phosphoserine is present on residues S365 and S368. Omega-N-methylarginine is present on R370.

As to quaternary structure, identified in the spliceosome C complex. Identified in a IGF2BP1-dependent mRNP granule complex containing untranslated mRNAs. Interacts with SEPT6. Interacts with C9orf72. Interacts with KHDRBS1. Interacts with UBQLN2. Interacts with PPIA/CYPA. Interacts (via the RGG-box) with the HOXB-AS3 peptide; the interaction inhibits binding of HNRNPA1 to the intronic sequences flanking exon 9 of the PKM gene, preventing inclusion of exon 9 and promoting inclusion of exon 10 which suppresses formation of the PKM M2 isoform and promotes production of the M1 isoform. In terms of assembly, (Microbial infection) Interacts with HCV NS5B and with the 5'-UTR and 3'-UTR of HCV RNA. (Microbial infection) May interact with SARS-CoV Nucleoprotein. In terms of processing, arg-194, Arg-206 and Arg-225 are dimethylated, probably to asymmetric dimethylarginine. Sumoylated.

It is found in the nucleus. Its subcellular location is the cytoplasm. Functionally, involved in the packaging of pre-mRNA into hnRNP particles, transport of poly(A) mRNA from the nucleus to the cytoplasm and modulation of splice site selection. Plays a role in the splicing of pyruvate kinase PKM by binding repressively to sequences flanking PKM exon 9, inhibiting exon 9 inclusion and resulting in exon 10 inclusion and production of the PKM M2 isoform. Binds to the IRES and thereby inhibits the translation of the apoptosis protease activating factor APAF1. May bind to specific miRNA hairpins. Its function is as follows. (Microbial infection) May play a role in HCV RNA replication. In terms of biological role, (Microbial infection) Cleavage by Enterovirus 71 protease 3C results in increased translation of apoptosis protease activating factor APAF1, leading to apoptosis. The chain is Heterogeneous nuclear ribonucleoprotein A1 (HNRNPA1) from Homo sapiens (Human).